A 130-amino-acid polypeptide reads, in one-letter code: Small ribosomal subunit protein uS9 (130 aa).

This sequence belongs to the universal ribosomal protein uS9 family.

The polypeptide is Small ribosomal subunit protein uS9 (Idiomarina loihiensis (strain ATCC BAA-735 / DSM 15497 / L2-TR)).